Consider the following 396-residue polypeptide: Mevalonate kinase (396 aa).

ATP-binding positions include lysine 13, asparagine 55, serine 135, and 140-146 (GAGLGSS). The active-site Proton donor is the serine 146. Serine 146 and glutamate 193 together coordinate Mg(2+). Aspartate 204 serves as the catalytic Proton acceptor.

This sequence belongs to the GHMP kinase family. Mevalonate kinase subfamily. In terms of assembly, homodimer. Requires Mg(2+) as cofactor.

The protein resides in the cytoplasm. It is found in the peroxisome. It catalyses the reaction (R)-mevalonate + ATP = (R)-5-phosphomevalonate + ADP + H(+). Its pathway is isoprenoid biosynthesis; isopentenyl diphosphate biosynthesis via mevalonate pathway; isopentenyl diphosphate from (R)-mevalonate: step 1/3. Its activity is regulated as follows. Farnesyl pyrophosphate and geranyl pyrophosphate inhibit mevalonate kinase activity by binding competitively at the ATP-binding sites. Catalyzes the phosphorylation of mevalonate to mevalonate 5-phosphate, a key step in isoprenoid and cholesterol biosynthesis. The sequence is that of Mevalonate kinase from Homo sapiens (Human).